Reading from the N-terminus, the 152-residue chain is Aspartate carbamoyltransferase regulatory chain (152 aa).

Residues C108, C113, C137, and C140 each coordinate Zn(2+).

This sequence belongs to the PyrI family. Contains catalytic and regulatory chains. Zn(2+) serves as cofactor.

Functionally, involved in allosteric regulation of aspartate carbamoyltransferase. The chain is Aspartate carbamoyltransferase regulatory chain from Neisseria meningitidis serogroup A / serotype 4A (strain DSM 15465 / Z2491).